The following is a 347-amino-acid chain: Twinfilin-2 (347 aa).

ADF-H domains are found at residues 3 to 137 (LVLV…RHIT) and 175 to 311 (GLAF…DEVH). Positions 314 to 347 (QHAHKQAFAKPRGPAGKRGNKRLIKGGGENGGNS) are disordered. The span at 338-347 (KGGGENGGNS) shows a compositional bias: gly residues.

Belongs to the actin-binding proteins ADF family. Twinfilin subfamily. In terms of assembly, interacts with G-actin; ADP-actin form and capping protein (CP).

Its subcellular location is the cytoplasm. It localises to the cytoskeleton. The protein localises to the perinuclear region. In terms of biological role, actin-binding protein involved in motile and morphological processes. Inhibits actin polymerization, likely by sequestering G-actin. This Danio rerio (Zebrafish) protein is Twinfilin-2 (twf2).